Here is a 109-residue protein sequence, read N- to C-terminus: Transcription initiation factor IIA subunit 2 (109 aa).

Belongs to the TFIIA subunit 2 family. TFIIA is a heterodimer of the large unprocessed subunit 1 and a small subunit gamma. It was originally believed to be a heterotrimer of an alpha (p35), a beta (p19) and a gamma subunit (p12). Interacts with NCOA6 general coactivator. TFIIA forms a complex with TBP. Interacts with HSF1 (via transactivation domain). Part of TBP-based Pol II pre-initiation complex (PIC), in which Pol II core assembles with general transcription factors and other specific initiation factors including GTF2E1, GTF2E2, GTF2F1, GTF2F2, TCEA1, ERCC2, ERCC3, GTF2H2, GTF2H3, GTF2H4, GTF2H5, GTF2A1, GTF2A2, GTF2B and TBP; this large multi-subunit PIC complex mediates DNA unwinding and targets Pol II core to the transcription start site where the first phosphodiester bond forms.

The protein resides in the nucleus. Its function is as follows. TFIIA is a component of the transcription machinery of RNA polymerase II and plays an important role in transcriptional activation. TFIIA in a complex with TBP mediates transcriptional activity. This chain is Transcription initiation factor IIA subunit 2 (Gtf2a2), found in Rattus norvegicus (Rat).